The sequence spans 472 residues: Coenzyme F(430) synthetase (472 aa).

119-125 (GVKAKTS) is a binding site for ATP.

The protein belongs to the MurCDEF family.

The catalysed reaction is 15,17(3)-seco-F430-17(3)-acid + ATP = coenzyme F430 + ADP + phosphate. Involved in the biosynthesis of the unique nickel-containing tetrapyrrole coenzyme F430, the prosthetic group of methyl-coenzyme M reductase (MCR), which plays a key role in methanogenesis and anaerobic methane oxidation. Catalyzes the activation the g-propionate side chain of 15,17(3)-seco-F430-17(3)-acid (seco-F430) for intramolecular C-C bond formation to yield the carbocyclic F ring of coenzyme F430. The chain is Coenzyme F(430) synthetase from Methanosarcina acetivorans (strain ATCC 35395 / DSM 2834 / JCM 12185 / C2A).